A 104-amino-acid polypeptide reads, in one-letter code: SOSS complex subunit C (104 aa).

A2 carries the N-acetylalanine modification.

Belongs to the SOSS-C family. As to quaternary structure, component of the SOSS complex, composed of SOSS-B (SOSS-B1/NABP2 or SOSS-B2/NABP1), SOSS-A/INTS3 and SOSS-C/INIP. SOSS complexes containing SOSS-B1/NABP2 are more abundant than complexes containing SOSS-B2/NABP1. Interacts with INTS3; the interaction is direct.

The protein localises to the nucleus. Its function is as follows. Component of the SOSS complex, a multiprotein complex that functions downstream of the MRN complex to promote DNA repair and G2/M checkpoint. The SOSS complex associates with single-stranded DNA at DNA lesions and influences diverse endpoints in the cellular DNA damage response including cell-cycle checkpoint activation, recombinational repair and maintenance of genomic stability. Required for efficient homologous recombination-dependent repair of double-strand breaks (DSBs) and ATM-dependent signaling pathways. The chain is SOSS complex subunit C (INIP) from Bos taurus (Bovine).